Consider the following 196-residue polypeptide: Ribonuclease HII (196 aa).

The 188-residue stretch at 9 to 196 (NLIAGVDEVG…APVKRALNLV (188 aa)) folds into the RNase H type-2 domain. Residues Asp15, Glu16, and Asp107 each coordinate a divalent metal cation.

It belongs to the RNase HII family. The cofactor is Mn(2+). Mg(2+) serves as cofactor.

The protein localises to the cytoplasm. It catalyses the reaction Endonucleolytic cleavage to 5'-phosphomonoester.. Its function is as follows. Endonuclease that specifically degrades the RNA of RNA-DNA hybrids. In Proteus mirabilis (strain HI4320), this protein is Ribonuclease HII.